The sequence spans 837 residues: Translation initiation factor IF-2 (837 aa).

Disordered regions lie at residues 1–44 (MTEK…VRKS) and 62–251 (KAQE…TKPA). Basic and acidic residues-rich tracts occupy residues 62-102 (KAQE…EAKP) and 111-165 (ADPE…HNDS). The span at 189 to 205 (RENHIRTGKNKVTKAKK) shows a compositional bias: basic residues. Basic and acidic residues predominate over residues 206–229 (GGRDDNGSKDERSADRRNQKDMRG). Polar residues predominate over residues 242–251 (TLQQAFTKPA). Positions 337 to 506 (QRAPVVTIMG…LLQSEVLELT (170 aa)) constitute a tr-type G domain. A G1 region spans residues 346–353 (GHVDHGKT). Position 346-353 (346-353 (GHVDHGKT)) interacts with GTP. The interval 371 to 375 (GITQH) is G2. Residues 392 to 395 (DTPG) are G3. GTP is bound by residues 392–396 (DTPGH) and 446–449 (NKID). The interval 446 to 449 (NKID) is G4. Positions 482–484 (SAK) are G5.

The protein belongs to the TRAFAC class translation factor GTPase superfamily. Classic translation factor GTPase family. IF-2 subfamily.

The protein resides in the cytoplasm. Functionally, one of the essential components for the initiation of protein synthesis. Protects formylmethionyl-tRNA from spontaneous hydrolysis and promotes its binding to the 30S ribosomal subunits. Also involved in the hydrolysis of GTP during the formation of the 70S ribosomal complex. The protein is Translation initiation factor IF-2 of Actinobacillus succinogenes (strain ATCC 55618 / DSM 22257 / CCUG 43843 / 130Z).